Here is a 310-residue protein sequence, read N- to C-terminus: tRNA-cytidine(32) 2-sulfurtransferase (310 aa).

The short motif at 45-50 is the PP-loop motif element; it reads SGGKDS. [4Fe-4S] cluster-binding residues include Cys120, Cys123, and Cys211.

This sequence belongs to the TtcA family. In terms of assembly, homodimer. Mg(2+) is required as a cofactor. Requires [4Fe-4S] cluster as cofactor.

It is found in the cytoplasm. It catalyses the reaction cytidine(32) in tRNA + S-sulfanyl-L-cysteinyl-[cysteine desulfurase] + AH2 + ATP = 2-thiocytidine(32) in tRNA + L-cysteinyl-[cysteine desulfurase] + A + AMP + diphosphate + H(+). The protein operates within tRNA modification. Functionally, catalyzes the ATP-dependent 2-thiolation of cytidine in position 32 of tRNA, to form 2-thiocytidine (s(2)C32). The sulfur atoms are provided by the cysteine/cysteine desulfurase (IscS) system. In Shewanella sp. (strain ANA-3), this protein is tRNA-cytidine(32) 2-sulfurtransferase.